The sequence spans 119 residues: Protein RALF-like 22 (119 aa).

A signal peptide spans 1–23; sequence MTNTRAIYAVIAILAIVISAVES. Positions 24-70 are cleaved as a propeptide — removed in mature form; that stretch reads TGDFGDSLDFVRAGSSSLFSGCTGSIAECIAEEEEMEFDSDISRRIL. 2 disulfide bridges follow: C88/C98 and C111/C117.

Belongs to the plant rapid alkalinization factor (RALF) family. In terms of processing, proteolytically cleaved, probably by S1P, a subtilisin-like serine protease (subtilase).

Its subcellular location is the secreted. Cell signaling peptide that may regulate plant stress, growth, and development. Mediates a rapid alkalinization of extracellular space by mediating a transient increase in the cytoplasmic Ca(2+) concentration leading to a calcium-dependent signaling events through a cell surface receptor and a concomitant activation of some intracellular mitogen-activated protein kinases. The sequence is that of Protein RALF-like 22 (RALFL22) from Arabidopsis thaliana (Mouse-ear cress).